A 106-amino-acid polypeptide reads, in one-letter code: Iron-sulfur cluster assembly protein CyaY (106 aa).

Belongs to the frataxin family.

Involved in iron-sulfur (Fe-S) cluster assembly. May act as a regulator of Fe-S biogenesis. This Salmonella paratyphi B (strain ATCC BAA-1250 / SPB7) protein is Iron-sulfur cluster assembly protein CyaY.